Consider the following 204-residue polypeptide: Small ribosomal subunit protein uS4 (204 aa).

Residues 22–43 are disordered; that stretch reads SGKELARRPYAPGDHGNTGRRP. The S4 RNA-binding domain occupies 94–154; it reads TRLDSVVFRL…ERSKKIVPIL (61 aa).

Belongs to the universal ribosomal protein uS4 family. As to quaternary structure, part of the 30S ribosomal subunit. Contacts protein S5. The interaction surface between S4 and S5 is involved in control of translational fidelity.

In terms of biological role, one of the primary rRNA binding proteins, it binds directly to 16S rRNA where it nucleates assembly of the body of the 30S subunit. With S5 and S12 plays an important role in translational accuracy. This chain is Small ribosomal subunit protein uS4, found in Oenococcus oeni (strain ATCC BAA-331 / PSU-1).